Here is a 57-residue protein sequence, read N- to C-terminus: Potassium channel toxin alpha-KTx 8.2 (57 aa).

The signal sequence occupies residues 1–28; it reads MSRLYAIILIALVFNVVMTITPDMKVEA. 3 disulfides stabilise this stretch: Cys31–Cys47, Cys34–Cys52, and Cys38–Cys54.

Belongs to the short scorpion toxin superfamily. Potassium channel inhibitor family. Alpha-KTx 08 subfamily. In terms of tissue distribution, expressed by the venom gland.

It localises to the secreted. In terms of biological role, this toxin inhibits rKv1.1/KCNA1 (100% inhibition at 3 uM), Kv1.3/KCNA3 (human, mouse and rat) (IC(50)=269-467 nM), shaker IR (60% at 3 uM) and activates the mouse capsaicin receptor TRPV1 (EC(50)=132 uM, at 20 degrees Celsius), a non-selective cation channel expressed by sensory neurons of the pain pathway. In vivo, intraplantar injection of this toxin in WT mice hind paw shows significant acute pain, whereas no pain is observed when the toxin is injected into TRPV1 KO mice. In addition, subcutaneous injection into mice (185 mg) produces an excitation of the animal, but no lethality, whereas injection into cockroaches does not provoke lethality as well. This is Potassium channel toxin alpha-KTx 8.2 from Olivierus martensii (Manchurian scorpion).